Consider the following 147-residue polypeptide: MFSSIGWPEIFTVLILGLIIIGPERLPKVIEDVRAAIYAAKKAINNAKEELNGNLGAEFDEFREPINKIASIQRMGPKAVLTKALFDEDENFMDNFDPKKIMASGTEGEAYRERGINPQPAGDSASPQTPSNKESQPKAGFSWDDIT.

A helical membrane pass occupies residues 2 to 22 (FSSIGWPEIFTVLILGLIIIG). Residues 96-147 (FDPKKIMASGTEGEAYRERGINPQPAGDSASPQTPSNKESQPKAGFSWDDIT) are disordered. Over residues 125–134 (ASPQTPSNKE) the composition is skewed to polar residues.

Belongs to the TatB family. In terms of assembly, the Tat system comprises two distinct complexes: a TatABC complex, containing multiple copies of TatA, TatB and TatC subunits, and a separate TatA complex, containing only TatA subunits. Substrates initially bind to the TatABC complex, which probably triggers association of the separate TatA complex to form the active translocon.

It is found in the cell membrane. Functionally, part of the twin-arginine translocation (Tat) system that transports large folded proteins containing a characteristic twin-arginine motif in their signal peptide across membranes. Together with TatC, TatB is part of a receptor directly interacting with Tat signal peptides. TatB may form an oligomeric binding site that transiently accommodates folded Tat precursor proteins before their translocation. The protein is Sec-independent protein translocase protein TatB of Corynebacterium diphtheriae (strain ATCC 700971 / NCTC 13129 / Biotype gravis).